A 936-amino-acid polypeptide reads, in one-letter code: Coiled-coil domain-containing protein 191 (936 aa).

Coiled coils occupy residues 189–270 and 364–440; these read RLTM…VKAA and RDYT…LQAA. Positions 495-541 are disordered; the sequence is LGRTTTGNLQGSLQNVSLSAPGNKQHKTLGAEPSQQPGSNETLRTTS. 2 stretches are compositionally biased toward polar residues: residues 497–516 and 527–541; these read RTTTGNLQGSLQNVSLSAPG and PSQQPGSNETLRTTS. Positions 554–592 form a coiled coil; that stretch reads NRHVFQQQLIEKQKKKLQEQQKTILELKKNLQLAEAQWA. 2 disordered regions span residues 607-656 and 691-714; these read LSKP…TPHP and KAQEEERQKREAEEKEAQLERKRE. Positions 662-739 form a coiled coil; sequence EERAIQRAEC…IKRNQQLEAI (78 aa).

This is Coiled-coil domain-containing protein 191 (CCDC191) from Homo sapiens (Human).